Reading from the N-terminus, the 451-residue chain is Tubulin gamma-1 chain (451 aa).

Serine 131 carries the phosphoserine; by BRSK1 modification. Alanine 142–glycine 148 is a GTP binding site.

Belongs to the tubulin family. In terms of assembly, component of the gamma-tubulin ring complex (gTuRC) consisting of TUBGCP2, TUBGCP3, TUBGCP4, TUBGCP5 and TUBGCP6 and gamma-tubulin TUBG1 or TUBG2. TUBGCP2, TUBGCP3, TUBGCP4, TUBGCP5 and TUBGCP6 assemble in a 5:5:2:1:1 stoichiometry; each is associated with a gamma-tubulin, thereby arranging 14 gamma-tubulins in a helical manner. Gamma-tubulin at the first position is blocked by TUBGCP3 at the last position, allowing 13 protafilaments to grow into a microtubule. The gTuRC (via TUBGCP3 and TUBGCP6) interacts with ACTB and MZT1; the interactions form a luminal bridge that stabilizes the initial structure during complex assembly. The gTuRC (via TUBGCP2) interacts with MZT2A/MZT2B and CDK5RAP2 (via CM1 motif); the interactions play a role in gTuRC activation. Interacts with alpha-beta tubulin heterodimers; the interaction allows microtubules to nucleate from the gTuRC. Interacts with B9D2. Interacts with CDK5RAP2; the interaction is leading to centrosomal localization of TUBG1 and CDK5RAP2. Interacts with CIMAP3. Interacts with SAS6 and NUP62 at the centrosome. Interacts with EML3 (phosphorylated at 'Thr-881') and HAUS8. Interacts with DNM2; this interaction may participate in centrosome cohesion. Interacts with CCDC66. Phosphorylation at Ser-131 by BRSK1 regulates centrosome duplication, possibly by mediating relocation of gamma-tubulin and its associated proteins from the cytoplasm to the centrosome.

It is found in the cytoplasm. It localises to the cytoskeleton. The protein localises to the microtubule organizing center. The protein resides in the centrosome. Its subcellular location is the spindle. Functionally, tubulin is the major constituent of microtubules, protein filaments consisting of alpha- and beta-tubulin heterodimers. Gamma-tubulin is a key component of the gamma-tubulin ring complex (gTuRC) which mediates microtubule nucleation. The gTuRC regulates the minus-end nucleation of alpha-beta tubulin heterodimers that grow into microtubule protafilaments, a critical step in centrosome duplication and spindle formation. In Homo sapiens (Human), this protein is Tubulin gamma-1 chain.